The sequence spans 904 residues: Protein translocase subunit SecA (904 aa).

ATP-binding positions include Q89, 107-111, and D502; that span reads GEGKT. Residues C886, C888, C897, and H898 each coordinate Zn(2+).

This sequence belongs to the SecA family. As to quaternary structure, monomer and homodimer. Part of the essential Sec protein translocation apparatus which comprises SecA, SecYEG and auxiliary proteins SecDF-YajC and YidC. Zn(2+) is required as a cofactor.

The protein localises to the cell inner membrane. It is found in the cytoplasm. It carries out the reaction ATP + H2O + cellular proteinSide 1 = ADP + phosphate + cellular proteinSide 2.. In terms of biological role, part of the Sec protein translocase complex. Interacts with the SecYEG preprotein conducting channel. Has a central role in coupling the hydrolysis of ATP to the transfer of proteins into and across the cell membrane, serving both as a receptor for the preprotein-SecB complex and as an ATP-driven molecular motor driving the stepwise translocation of polypeptide chains across the membrane. The polypeptide is Protein translocase subunit SecA (Rhizobium etli (strain CIAT 652)).